The sequence spans 346 residues: Methylthioribose-1-phosphate isomerase (346 aa).

Substrate is bound by residues 46–48 (RGA), R89, and Q196. The active-site Proton donor is D237. 247–248 (NK) is a binding site for substrate.

Belongs to the eIF-2B alpha/beta/delta subunits family. MtnA subfamily.

The enzyme catalyses 5-(methylsulfanyl)-alpha-D-ribose 1-phosphate = 5-(methylsulfanyl)-D-ribulose 1-phosphate. It functions in the pathway amino-acid biosynthesis; L-methionine biosynthesis via salvage pathway; L-methionine from S-methyl-5-thio-alpha-D-ribose 1-phosphate: step 1/6. Catalyzes the interconversion of methylthioribose-1-phosphate (MTR-1-P) into methylthioribulose-1-phosphate (MTRu-1-P). The sequence is that of Methylthioribose-1-phosphate isomerase from Geotalea uraniireducens (strain Rf4) (Geobacter uraniireducens).